The chain runs to 548 residues: Splicing factor U2af large subunit B (548 aa).

Residues 1-82 show a composition bias toward basic and acidic residues; that stretch reads MADDHAAAAD…DRDRDRDKDR (82 aa). A disordered region spans residues 1–156; sequence MADDHAAAAD…SKRVSGFDMA (156 aa). Basic residues predominate over residues 83–93; it reads DRHHRHHRERR. Over residues 94–120 the composition is skewed to basic and acidic residues; the sequence is EHRDRSDDHDRHRSRDSERRRDHERDG. Residues 121–149 show a composition bias toward basic residues; sequence RRRHRSRSRSRSRGRDRRSRSRSRSKSKR. 3 RRM domains span residues 214-297, 334-412, and 453-539; these read RRVY…RPTD, DRIF…RANQ, and QVVS…YPEN.

Belongs to the splicing factor SR family.

It localises to the nucleus. In terms of biological role, necessary for the splicing of pre-mRNA. The sequence is that of Splicing factor U2af large subunit B (U2AF65B) from Oryza sativa subsp. japonica (Rice).